A 98-amino-acid chain; its full sequence is NADH-ubiquinone oxidoreductase chain 4L (98 aa).

The next 3 helical transmembrane spans lie at 1 to 21 (MSMV…GLLM), 29 to 49 (SLLC…VTIL), and 61 to 81 (IILL…LVMV).

The protein belongs to the complex I subunit 4L family. As to quaternary structure, core subunit of respiratory chain NADH dehydrogenase (Complex I) which is composed of 45 different subunits.

It localises to the mitochondrion inner membrane. It catalyses the reaction a ubiquinone + NADH + 5 H(+)(in) = a ubiquinol + NAD(+) + 4 H(+)(out). Core subunit of the mitochondrial membrane respiratory chain NADH dehydrogenase (Complex I) which catalyzes electron transfer from NADH through the respiratory chain, using ubiquinone as an electron acceptor. Part of the enzyme membrane arm which is embedded in the lipid bilayer and involved in proton translocation. The sequence is that of NADH-ubiquinone oxidoreductase chain 4L (MT-ND4L) from Halichoerus grypus (Gray seal).